A 250-amino-acid polypeptide reads, in one-letter code: Hydroxyacylglutathione hydrolase (250 aa).

7 residues coordinate Zn(2+): H52, H54, D56, H57, H107, D128, and H166.

It belongs to the metallo-beta-lactamase superfamily. Glyoxalase II family. As to quaternary structure, monomer. Zn(2+) is required as a cofactor.

It catalyses the reaction an S-(2-hydroxyacyl)glutathione + H2O = a 2-hydroxy carboxylate + glutathione + H(+). It functions in the pathway secondary metabolite metabolism; methylglyoxal degradation; (R)-lactate from methylglyoxal: step 2/2. Its function is as follows. Thiolesterase that catalyzes the hydrolysis of S-D-lactoyl-glutathione to form glutathione and D-lactic acid. This chain is Hydroxyacylglutathione hydrolase, found in Neisseria meningitidis serogroup A / serotype 4A (strain DSM 15465 / Z2491).